A 58-amino-acid chain; its full sequence is MFNAYLDTVLDLSANGTVILAKLPEAYAIFDPIVDVMPIIPVFFLLLAFVWQAAVSFR.

A propeptide spanning residues 1-21 (MFNAYLDTVLDLSANGTVILA) is cleaved from the precursor. A helical transmembrane segment spans residues 29–49 (IFDPIVDVMPIIPVFFLLLAF).

The protein belongs to the PsbK family. PSII is composed of 1 copy each of membrane proteins PsbA, PsbB, PsbC, PsbD, PsbE, PsbF, PsbH, PsbI, PsbJ, PsbK, PsbL, PsbM, PsbT, PsbX, PsbY, PsbZ, Psb30/Ycf12, at least 3 peripheral proteins of the oxygen-evolving complex and a large number of cofactors. It forms dimeric complexes.

It is found in the plastid. Its subcellular location is the chloroplast thylakoid membrane. One of the components of the core complex of photosystem II (PSII). PSII is a light-driven water:plastoquinone oxidoreductase that uses light energy to abstract electrons from H(2)O, generating O(2) and a proton gradient subsequently used for ATP formation. It consists of a core antenna complex that captures photons, and an electron transfer chain that converts photonic excitation into a charge separation. The chain is Photosystem II reaction center protein K from Staurastrum punctulatum (Green alga).